The chain runs to 414 residues: uncharacterized protein (414 aa).

3 disordered regions span residues 136–168 (SSKS…TVPT), 298–322 (KNFP…SYHR), and 350–382 (PPHS…MSTS).

This is an uncharacterized protein from Macaca fascicularis (Crab-eating macaque).